Reading from the N-terminus, the 158-residue chain is Ribosome-binding factor A (158 aa).

Residues T130–E158 are disordered. A compositionally biased stretch (acidic residues) spans E145–E158.

Belongs to the RbfA family. As to quaternary structure, monomer. Binds 30S ribosomal subunits, but not 50S ribosomal subunits or 70S ribosomes.

It localises to the cytoplasm. One of several proteins that assist in the late maturation steps of the functional core of the 30S ribosomal subunit. Associates with free 30S ribosomal subunits (but not with 30S subunits that are part of 70S ribosomes or polysomes). Required for efficient processing of 16S rRNA. May interact with the 5'-terminal helix region of 16S rRNA. The polypeptide is Ribosome-binding factor A (Bifidobacterium longum subsp. infantis (strain ATCC 15697 / DSM 20088 / JCM 1222 / NCTC 11817 / S12)).